The following is a 234-amino-acid chain: tRNA1(Val) (adenine(37)-N6)-methyltransferase (234 aa).

This sequence belongs to the methyltransferase superfamily. tRNA (adenine-N(6)-)-methyltransferase family.

Its subcellular location is the cytoplasm. It carries out the reaction adenosine(37) in tRNA1(Val) + S-adenosyl-L-methionine = N(6)-methyladenosine(37) in tRNA1(Val) + S-adenosyl-L-homocysteine + H(+). In terms of biological role, specifically methylates the adenine in position 37 of tRNA(1)(Val) (anticodon cmo5UAC). This is tRNA1(Val) (adenine(37)-N6)-methyltransferase from Aliivibrio fischeri (strain MJ11) (Vibrio fischeri).